A 73-amino-acid polypeptide reads, in one-letter code: Capsid protein G8P (73 aa).

The N-terminal stretch at 1–23 (MKKSLVLKASVAVATLVPMLSFA) is a signal peptide. The Periplasmic segment spans residues 24–47 (AEGDDPAKAAFNSLQASATEYIGY). Residues 48–68 (AWAMVVVIVGATIGIKLFKKF) form a helical membrane-spanning segment. The Cytoplasmic segment spans residues 69–73 (TSKAS).

Belongs to the inovirus capsid protein family. Homomultimerizes. There are about 2,700 copies of this protein in the phage capsid.

The protein resides in the virion. The protein localises to the host cell inner membrane. In terms of biological role, self assembles to form a helical capsid wrapping up the viral genomic DNA. The capsid displays a filamentous structure with a length of 760-1950 nm and a width of 6-8 nm. The virion assembly and budding take place at the host inner membrane. The sequence is that of Capsid protein G8P (VIII) from Enterobacteria phage M13 (Bacteriophage M13).